We begin with the raw amino-acid sequence, 1166 residues long: DNA-directed RNA polymerase subunit beta (1166 aa).

It belongs to the RNA polymerase beta chain family. In terms of assembly, the RNAP catalytic core consists of 2 alpha, 1 beta, 1 beta' and 1 omega subunit. When a sigma factor is associated with the core the holoenzyme is formed, which can initiate transcription.

It catalyses the reaction RNA(n) + a ribonucleoside 5'-triphosphate = RNA(n+1) + diphosphate. Functionally, DNA-dependent RNA polymerase catalyzes the transcription of DNA into RNA using the four ribonucleoside triphosphates as substrates. The sequence is that of DNA-directed RNA polymerase subunit beta from Nocardioides sp. (strain ATCC BAA-499 / JS614).